Here is a 1020-residue protein sequence, read N- to C-terminus: Phosphatidylinositol 3-kinase VPS34 (1020 aa).

In terms of domain architecture, C2 PI3K-type spans 49-210; that stretch reads LSTKFEDPTV…NWLDKMVLPK (162 aa). Residues 331-577 enclose the PIK helical domain; that stretch reads DKELKPTPQL…DGPIKIYMDI (247 aa). The PI3K/PI4K catalytic domain maps to 666 to 1004; the sequence is YPEESSVFKS…LINDSVNAFL (339 aa). The segment at 672–678 is G-loop; it reads VFKSSLA. The interval 873 to 881 is catalytic loop; it reads GVGDRHLDN. Positions 892–913 are activation loop; it reads HADFGYILGRDPKPFPPLMKLP.

Belongs to the PI3/PI4-kinase family. Component of the autophagy-specific VPS34 PI3-kinase complex I composed of at least VPS15, VPS30, VPS34, and of the VPS34 PI3-kinase complex II composed of VPS15, VPS30, VPS34 and VPS38. Interacts with VMNA7. In terms of processing, autophosphorylated.

The protein resides in the golgi apparatus. Its subcellular location is the trans-Golgi network membrane. The protein localises to the endosome membrane. It carries out the reaction a 1,2-diacyl-sn-glycero-3-phospho-(1D-myo-inositol) + ATP = a 1,2-diacyl-sn-glycero-3-phospho-(1D-myo-inositol-3-phosphate) + ADP + H(+). Multifunctional phosphatidylinositol 3-kinase involved in acidification of vacuoles, pH-dependent cell growth, and autophagocytosis. Plays an important role in protein transport and virulence. Component of the autophagy-specific VPS34 PI3-kinase complex I essential to recruit the ATG8-phosphatidylinositol conjugate and the ATG12-ATG5 conjugate to the pre-autophagosomal structure. Also involved in endosome-to-Golgi retrograde transport as part of the VPS34 PI3-kinase complex II. This second complex is required for the endosome-to-Golgi retrieval of PEP1 and KEX2, and the recruitment of VPS5 and VPS7, two components of the retromer complex, to endosomal membranes (probably through the synthesis of a specific pool of phosphatidylinositol 3-phosphate recruiting the retromer to the endosomes). Finally, it might also be involved in ethanol tolerance and cell wall integrity. The sequence is that of Phosphatidylinositol 3-kinase VPS34 from Candida albicans (Yeast).